A 239-amino-acid chain; its full sequence is MVQHLSAEEIIQYISDAKKSTPLKVYVNGNFDGVTFPDSFKVFGSDNSKVIFCEADDWKPFYESNQSTITELEIEMDRRNSAIPLKDLTNTNARIEPGAFIREQAIIEDGAVVMMGATINIGAVVGEGTMIDMNATLGGRATTGKNVHVGAGAVLAGVIEPPSASPVVIDDNVLIGANAVILEGVHVGEGAIVAAGAIVTQDVPAGAVVAGTPAKVIKQTSEVEDSKREIVSALRKLND.

The protein belongs to the transferase hexapeptide repeat family. DapH subfamily.

The enzyme catalyses (S)-2,3,4,5-tetrahydrodipicolinate + acetyl-CoA + H2O = L-2-acetamido-6-oxoheptanedioate + CoA. The protein operates within amino-acid biosynthesis; L-lysine biosynthesis via DAP pathway; LL-2,6-diaminopimelate from (S)-tetrahydrodipicolinate (acetylase route): step 1/3. Catalyzes the transfer of an acetyl group from acetyl-CoA to tetrahydrodipicolinate. In Staphylococcus haemolyticus (strain JCSC1435), this protein is 2,3,4,5-tetrahydropyridine-2,6-dicarboxylate N-acetyltransferase.